The sequence spans 459 residues: Argininosuccinate lyase (459 aa).

Belongs to the lyase 1 family. Argininosuccinate lyase subfamily.

Its subcellular location is the cytoplasm. The enzyme catalyses 2-(N(omega)-L-arginino)succinate = fumarate + L-arginine. The protein operates within amino-acid biosynthesis; L-arginine biosynthesis; L-arginine from L-ornithine and carbamoyl phosphate: step 3/3. This is Argininosuccinate lyase from Buchnera aphidicola subsp. Schizaphis graminum (strain Sg).